We begin with the raw amino-acid sequence, 237 residues long: Small ribosomal subunit protein uS3 (237 aa).

A KH type-2 domain is found at 39–107 (VRQFLTKELK…PAQINISEVR (69 aa)).

It belongs to the universal ribosomal protein uS3 family. In terms of assembly, part of the 30S ribosomal subunit. Forms a tight complex with proteins S10 and S14.

Functionally, binds the lower part of the 30S subunit head. Binds mRNA in the 70S ribosome, positioning it for translation. This Aeromonas hydrophila subsp. hydrophila (strain ATCC 7966 / DSM 30187 / BCRC 13018 / CCUG 14551 / JCM 1027 / KCTC 2358 / NCIMB 9240 / NCTC 8049) protein is Small ribosomal subunit protein uS3.